Consider the following 329-residue polypeptide: Phosphoenolpyruvate transferase (329 aa).

Residue Asp-61 participates in 7,8-didemethyl-8-hydroxy-5-deazariboflavin binding.

Belongs to the CofD family. As to quaternary structure, homodimer. Mg(2+) is required as a cofactor.

The enzyme catalyses enolpyruvoyl-2-diphospho-5'-guanosine + 7,8-didemethyl-8-hydroxy-5-deazariboflavin = dehydro coenzyme F420-0 + GMP + H(+). The protein operates within cofactor biosynthesis; coenzyme F420 biosynthesis. Functionally, catalyzes the transfer of the phosphoenolpyruvate moiety from enoylpyruvoyl-2-diphospho-5'-guanosine (EPPG) to 7,8-didemethyl-8-hydroxy-5-deazariboflavin (FO) with the formation of dehydro coenzyme F420-0 and GMP. This Mycobacterium marinum (strain ATCC BAA-535 / M) protein is Phosphoenolpyruvate transferase.